Reading from the N-terminus, the 496-residue chain is Glycerol kinase (496 aa).

ADP is bound at residue T12. 3 residues coordinate ATP: T12, T13, and S14. T12 lines the sn-glycerol 3-phosphate pocket. R16 lines the ADP pocket. 3 residues coordinate sn-glycerol 3-phosphate: R82, E83, and Y134. Residues R82, E83, and Y134 each contribute to the glycerol site. At H230 the chain carries Phosphohistidine; by HPr. Sn-glycerol 3-phosphate is bound at residue D244. Positions 244 and 245 each coordinate glycerol. T266 and G309 together coordinate ADP. 4 residues coordinate ATP: T266, G309, Q313, and G410. 2 residues coordinate ADP: G410 and N414.

It belongs to the FGGY kinase family. In terms of assembly, homotetramer and homodimer (in equilibrium). The phosphoenolpyruvate-dependent sugar phosphotransferase system (PTS), including enzyme I, and histidine-containing protein (HPr) are required for the phosphorylation, which leads to the activation of the enzyme.

It catalyses the reaction glycerol + ATP = sn-glycerol 3-phosphate + ADP + H(+). The protein operates within polyol metabolism; glycerol degradation via glycerol kinase pathway; sn-glycerol 3-phosphate from glycerol: step 1/1. Its activity is regulated as follows. Activated by phosphorylation and inhibited by fructose 1,6-bisphosphate (FBP). Key enzyme in the regulation of glycerol uptake and metabolism. Catalyzes the phosphorylation of glycerol to yield sn-glycerol 3-phosphate. This is Glycerol kinase from Bacillus mycoides (strain KBAB4) (Bacillus weihenstephanensis).